The following is a 144-amino-acid chain: Interleukin-9 (144 aa).

Residues 1-18 (MLLAMVLTSALLLCSVAG) form the signal peptide. Gln19 bears the Pyrrolidone carboxylic acid mark. Residues Asn50, Asn63, Asn78, and Asn114 are each glycosylated (N-linked (GlcNAc...) asparagine).

The protein belongs to the IL-7/IL-9 family. Interacts with IL9R. Interacts with IL2RG.

The protein resides in the secreted. In terms of biological role, multifunctional cytokine secreted mainly by T-helper 2 lymphocytes and also mast cells or NKT cells that plays important roles in the immune response against parasites. Affects intestinal epithelial permeability and adaptive immunity. In addition, induces the differentiation of specific T-cell subsets such as IL-17 producing helper T-cells (TH17) and also proliferation and differentiation of mast cells. Mechanistically, exerts its biological effects through a receptor composed of IL9R subunit and a signal transducing subunit IL2RG. Receptor stimulation results in the rapid activation of JAK1 and JAK3 kinase activities leading to STAT1, STAT3 and STAT5-mediated transcriptional programs. Induction of differentiation genes seems to be mediated by STAT1 alone, while protection of cells from apoptosis depends on STAT3 and STAT5. The sequence is that of Interleukin-9 (IL9) from Homo sapiens (Human).